Reading from the N-terminus, the 450-residue chain is Proline--tRNA ligase (450 aa).

Belongs to the class-II aminoacyl-tRNA synthetase family. ProS type 2 subfamily. In terms of assembly, homodimer.

It is found in the cytoplasm. It carries out the reaction tRNA(Pro) + L-proline + ATP = L-prolyl-tRNA(Pro) + AMP + diphosphate. Its function is as follows. Catalyzes the attachment of proline to tRNA(Pro) in a two-step reaction: proline is first activated by ATP to form Pro-AMP and then transferred to the acceptor end of tRNA(Pro). The sequence is that of Proline--tRNA ligase from Paracoccus denitrificans (strain Pd 1222).